We begin with the raw amino-acid sequence, 105 residues long: uncharacterized protein (105 aa).

The Cupin type-2 domain maps to Leu33 to Phe100.

This is an uncharacterized protein from Streptomyces coelicolor (strain ATCC BAA-471 / A3(2) / M145).